Reading from the N-terminus, the 277-residue chain is RsbT co-antagonist protein RsbRB (277 aa).

Residues 165–276 (SSPVITLSKS…TNLAQALNYH (112 aa)) form the STAS domain. Phosphothreonine is present on Thr-186.

In terms of assembly, interacts with RsbRA and RsbS in the stressosome. The stressosome probably also contains RsbRC and RsbRD. Phosphorylated by RsbT.

Functionally, one of 4 functionally non-identical RsbR paralogs, it functions in the environmental signaling branch of the general stress response. In terms of biological role, negative regulator of sigma-B activity. Non-phosphorylated RsbS binds to RsbT, preventing its association with RsbU. Requires any one of RsbRA, RsbRB, RsbRC or RsbRD to sequester RsbT. When RsbS and the RsbR paralog(s) are phosphorylated, they release RsbT, which can then bind and activate RsbU. This is RsbT co-antagonist protein RsbRB (rsbRB) from Bacillus subtilis (strain 168).